A 364-amino-acid chain; its full sequence is Aminomethyltransferase (364 aa).

It belongs to the GcvT family. The glycine cleavage system is composed of four proteins: P, T, L and H.

It carries out the reaction N(6)-[(R)-S(8)-aminomethyldihydrolipoyl]-L-lysyl-[protein] + (6S)-5,6,7,8-tetrahydrofolate = N(6)-[(R)-dihydrolipoyl]-L-lysyl-[protein] + (6R)-5,10-methylene-5,6,7,8-tetrahydrofolate + NH4(+). Functionally, the glycine cleavage system catalyzes the degradation of glycine. The polypeptide is Aminomethyltransferase (Shewanella piezotolerans (strain WP3 / JCM 13877)).